The chain runs to 242 residues: MDVARDMEKNTTAMGQLMSSSATTAATATGPASPKRPAGRTKFQETRHPVFRGVRRRGRAGRWVCEVRVPGSRGDRLWVGTFDTAEEAARAHDAAMLAMCGASASLNFTDSAWLLHVPRAPVASGHDQLPDVQRAASEAVAEFQRRGSTAATATATSGDAASTAPPSSSPVLSPNDDNASSASTPAVAAALDHGDMFGGMRADLYYASLAQGLLIEPPPPPTTTEGFCDDEGCGGAEMELWS.

The span at 20–29 (SSATTAATAT) shows a compositional bias: low complexity. The tract at residues 20–44 (SSATTAATATGPASPKRPAGRTKFQ) is disordered. Positions 50–109 (VFRGVRRRGRAGRWVCEVRVPGSRGDRLWVGTFDTAEEAARAHDAAMLAMCGASASLNFT) form a DNA-binding region, AP2/ERF. The segment at 143 to 184 (FQRRGSTAATATATSGDAASTAPPSSSPVLSPNDDNASSAST) is disordered. Residues 148-184 (STAATATATSGDAASTAPPSSSPVLSPNDDNASSAST) show a composition bias toward low complexity.

This sequence belongs to the AP2/ERF transcription factor family. ERF subfamily.

Its subcellular location is the nucleus. Transcriptional activator that binds specifically to the DNA sequence 5'-[AG]CCGAC-3'. Binding to the C-repeat/DRE element mediates high salinity- and dehydration-inducible transcription. The polypeptide is Dehydration-responsive element-binding protein 1J (DREB1J) (Oryza sativa subsp. indica (Rice)).